A 126-amino-acid chain; its full sequence is Aspartate 1-decarboxylase (126 aa).

The active-site Schiff-base intermediate with substrate; via pyruvic acid is the S25. A Pyruvic acid (Ser) modification is found at S25. Substrate is bound at residue T57. Y58 functions as the Proton donor in the catalytic mechanism. A substrate-binding site is contributed by G73–A75.

It belongs to the PanD family. In terms of assembly, heterooctamer of four alpha and four beta subunits. Pyruvate is required as a cofactor. In terms of processing, is synthesized initially as an inactive proenzyme, which is activated by self-cleavage at a specific serine bond to produce a beta-subunit with a hydroxyl group at its C-terminus and an alpha-subunit with a pyruvoyl group at its N-terminus.

It localises to the cytoplasm. It carries out the reaction L-aspartate + H(+) = beta-alanine + CO2. It functions in the pathway cofactor biosynthesis; (R)-pantothenate biosynthesis; beta-alanine from L-aspartate: step 1/1. Catalyzes the pyruvoyl-dependent decarboxylation of aspartate to produce beta-alanine. This chain is Aspartate 1-decarboxylase, found in Xanthomonas campestris pv. campestris (strain ATCC 33913 / DSM 3586 / NCPPB 528 / LMG 568 / P 25).